Reading from the N-terminus, the 330-residue chain is Lipoyl synthase (330 aa).

Positions 77, 82, 88, 103, 107, 110, and 317 each coordinate [4Fe-4S] cluster. The region spanning 89-306 (FNHGTATFMI…RSEAERMGFE (218 aa)) is the Radical SAM core domain.

This sequence belongs to the radical SAM superfamily. Lipoyl synthase family. Requires [4Fe-4S] cluster as cofactor.

Its subcellular location is the cytoplasm. It catalyses the reaction [[Fe-S] cluster scaffold protein carrying a second [4Fe-4S](2+) cluster] + N(6)-octanoyl-L-lysyl-[protein] + 2 oxidized [2Fe-2S]-[ferredoxin] + 2 S-adenosyl-L-methionine + 4 H(+) = [[Fe-S] cluster scaffold protein] + N(6)-[(R)-dihydrolipoyl]-L-lysyl-[protein] + 4 Fe(3+) + 2 hydrogen sulfide + 2 5'-deoxyadenosine + 2 L-methionine + 2 reduced [2Fe-2S]-[ferredoxin]. Its pathway is protein modification; protein lipoylation via endogenous pathway; protein N(6)-(lipoyl)lysine from octanoyl-[acyl-carrier-protein]: step 2/2. Its function is as follows. Catalyzes the radical-mediated insertion of two sulfur atoms into the C-6 and C-8 positions of the octanoyl moiety bound to the lipoyl domains of lipoate-dependent enzymes, thereby converting the octanoylated domains into lipoylated derivatives. The polypeptide is Lipoyl synthase (Actinobacillus pleuropneumoniae serotype 3 (strain JL03)).